Consider the following 57-residue polypeptide: UPF0434 protein Shal_2504 (57 aa).

It belongs to the UPF0434 family.

This chain is UPF0434 protein Shal_2504, found in Shewanella halifaxensis (strain HAW-EB4).